Reading from the N-terminus, the 191-residue chain is Inosine triphosphate pyrophosphatase (191 aa).

Residue 15 to 20 (TGNTNK) participates in ITP binding. Glutamate 43 contributes to the Mg(2+) binding site. ITP contacts are provided by residues lysine 55, 71–72 (DT), lysine 88, 147–150 (FGWD), lysine 168, and 173–174 (HR).

It belongs to the HAM1 NTPase family. Homodimer. Requires Mg(2+) as cofactor. Mn(2+) serves as cofactor.

The protein localises to the cytoplasm. It is found in the nucleus. The catalysed reaction is ITP + H2O = IMP + diphosphate + H(+). It carries out the reaction dITP + H2O = dIMP + diphosphate + H(+). The enzyme catalyses XTP + H2O = XMP + diphosphate + H(+). In terms of biological role, pyrophosphatase that hydrolyzes non-canonical purine nucleotides such as inosine triphosphate (ITP), deoxyinosine triphosphate (dITP) or xanthosine 5'-triphosphate (XTP) to their respective monophosphate derivatives. The enzyme does not distinguish between the deoxy- and ribose forms. Probably excludes non-canonical purines from RNA and DNA precursor pools, thus preventing their incorporation into RNA and DNA and avoiding chromosomal lesions. This chain is Inosine triphosphate pyrophosphatase, found in Chaetomium globosum (strain ATCC 6205 / CBS 148.51 / DSM 1962 / NBRC 6347 / NRRL 1970) (Soil fungus).